The chain runs to 188 residues: Josephin-2 (188 aa).

The Josephin domain maps to 11-188; it reads PPTVYHERQR…EEKGSWLRTD (178 aa). C24 serves as the catalytic Nucleophile. The active-site Proton acceptor is H125.

The protein localises to the cytoplasm. The protein resides in the cytosol. It carries out the reaction Thiol-dependent hydrolysis of ester, thioester, amide, peptide and isopeptide bonds formed by the C-terminal Gly of ubiquitin (a 76-residue protein attached to proteins as an intracellular targeting signal).. Its function is as follows. Cleaves 'Lys-63'-linked poly-ubiquitin chains, and with lesser efficiency 'Lys-48'-linked poly-ubiquitin chains (in vitro). May act as a deubiquitinating enzyme. This is Josephin-2 (JOSD2) from Homo sapiens (Human).